A 440-amino-acid chain; its full sequence is Adenylosuccinate synthetase (440 aa).

Residues 13 to 19 (GDEGKGK) and 41 to 43 (GHT) contribute to the GTP site. D14 acts as the Proton acceptor in catalysis. Mg(2+) is bound by residues D14 and G41. IMP contacts are provided by residues 14-17 (DEGK), 39-42 (NAGH), T135, R149, Q230, T245, and R313. The Proton donor role is filled by H42. 309–315 (TVTKRKR) contributes to the substrate binding site. Residues R315, 341–343 (KLD), and 423–425 (STG) contribute to the GTP site.

This sequence belongs to the adenylosuccinate synthetase family. Homodimer. It depends on Mg(2+) as a cofactor.

The protein localises to the cytoplasm. The enzyme catalyses IMP + L-aspartate + GTP = N(6)-(1,2-dicarboxyethyl)-AMP + GDP + phosphate + 2 H(+). It functions in the pathway purine metabolism; AMP biosynthesis via de novo pathway; AMP from IMP: step 1/2. In terms of biological role, plays an important role in the de novo pathway of purine nucleotide biosynthesis. Catalyzes the first committed step in the biosynthesis of AMP from IMP. This chain is Adenylosuccinate synthetase, found in Methylobacillus flagellatus (strain ATCC 51484 / DSM 6875 / VKM B-1610 / KT).